Consider the following 73-residue polypeptide: Sec-independent protein translocase protein TatA (73 aa).

Residues 1–21 (MGSFSIWHWLIVLVIVMLVFG) form a helical membrane-spanning segment. Positions 43-73 (MKEGDDKAAPAKELRDSTTIDVDAKEKTRQQ) are disordered.

It belongs to the TatA/E family. The Tat system comprises two distinct complexes: a TatABC complex, containing multiple copies of TatA, TatB and TatC subunits, and a separate TatA complex, containing only TatA subunits. Substrates initially bind to the TatABC complex, which probably triggers association of the separate TatA complex to form the active translocon.

Its subcellular location is the cell inner membrane. Part of the twin-arginine translocation (Tat) system that transports large folded proteins containing a characteristic twin-arginine motif in their signal peptide across membranes. TatA could form the protein-conducting channel of the Tat system. This Cupriavidus pinatubonensis (strain JMP 134 / LMG 1197) (Cupriavidus necator (strain JMP 134)) protein is Sec-independent protein translocase protein TatA.